Here is a 1192-residue protein sequence, read N- to C-terminus: Protein argonaute 13 (1192 aa).

A PAZ domain is found at 183-296; it reads TVIQFVEEFL…LPMEVCKIVE (114 aa). Positions 472 to 770 constitute a Piwi domain; that stretch reads LLIVILLEVS…AASHAHCCIK (299 aa).

Belongs to the argonaute family. Ago subfamily.

Probably involved in the RNA silencing pathway. May bind to short RNAs such as microRNAs (miRNAs) or short interfering RNAs (siRNAs), and represses the translation of mRNAs which are complementary to them. The chain is Protein argonaute 13 (AGO13) from Oryza sativa subsp. japonica (Rice).